We begin with the raw amino-acid sequence, 294 residues long: FAD-dependent monooxygenase SAT1 (294 aa).

Aspartate 108 is an FAD binding site.

Belongs to the paxM FAD-dependent monooxygenase family. Requires FAD as cofactor.

It participates in mycotoxin biosynthesis. In terms of biological role, FAD-dependent monooxygenase; part of the satratoxin SC1 cluster involved in the biosynthesis of satratoxins, trichothecene mycotoxins that are associated with human food poisonings. Satratoxins are suggested to be made by products of multiple gene clusters (SC1, SC2 and SC3) that encode 21 proteins in all, including polyketide synthases, acetyltransferases, and other enzymes expected to modify the trichothecene skeleton. SC1 encodes 10 proteins, SAT1 to SAT10. The largest are SAT8, which encodes a putative polyketide synthase (PKS) with a conventional non-reducing architecture, and SAT10, a putative protein containing four ankyrin repeats and thus may be involved in protein scaffolding. The putative short-chain reductase SAT3 may assist the PKS in some capacity. SAT6 contains a secretory lipase domain and acts probably as a trichothecene esterase. SAT5 encodes a putative acetyltransferase, and so, with SAT6, may affect endogenous protection from toxicity. The probable transcription factor SAT9 may regulate the expression of the SC1 cluster. SC2 encodes proteins SAT11 to SAT16, the largest of which encodes the putative reducing PKS SAT13. SAT11 is a cytochrome P450 monooxygenase, while SAT14 and SAT16 are probable acetyltransferases. The SC2 cluster may be regulated by the transcription factor SAT15. SC3 is a small cluster that encodes 5 proteins, SAT17 to SAT21. SAT21 is a putative MFS-type transporter which may have a role in exporting secondary metabolites. The four other proteins putatively encoded in SC3 include the taurine hydroxylase-like protein SAT17, the O-methyltransferase SAT18, the acetyltransferase SAT19, and the Cys6-type zinc finger SAT20, the latter being probably involved in regulation of SC3 expression. The chain is FAD-dependent monooxygenase SAT1 from Stachybotrys chartarum (strain CBS 109288 / IBT 7711) (Toxic black mold).